We begin with the raw amino-acid sequence, 667 residues long: UvrABC system protein B (667 aa).

In terms of domain architecture, Helicase ATP-binding spans 25 to 180; it reads DSLQNQHRFQ…LLRALVSVQY (156 aa). ATP is bound at residue 38–45; it reads GATGTGKT. The Beta-hairpin motif lies at 91–114; that stretch reads YYDYYQPEAYIPVSDTYIEKSSSI. The region spanning 429–595 is the Helicase C-terminal domain; that stretch reads QVDDLLGEIK…PIVKRSSNSI (167 aa). Positions 626 to 661 constitute a UVR domain; the sequence is PELIQQLEAQMKEAAKNLEFESAAKYRDRIKQLRDK.

It belongs to the UvrB family. As to quaternary structure, forms a heterotetramer with UvrA during the search for lesions. Interacts with UvrC in an incision complex.

It localises to the cytoplasm. In terms of biological role, the UvrABC repair system catalyzes the recognition and processing of DNA lesions. A damage recognition complex composed of 2 UvrA and 2 UvrB subunits scans DNA for abnormalities. Upon binding of the UvrA(2)B(2) complex to a putative damaged site, the DNA wraps around one UvrB monomer. DNA wrap is dependent on ATP binding by UvrB and probably causes local melting of the DNA helix, facilitating insertion of UvrB beta-hairpin between the DNA strands. Then UvrB probes one DNA strand for the presence of a lesion. If a lesion is found the UvrA subunits dissociate and the UvrB-DNA preincision complex is formed. This complex is subsequently bound by UvrC and the second UvrB is released. If no lesion is found, the DNA wraps around the other UvrB subunit that will check the other stand for damage. The chain is UvrABC system protein B from Microcystis aeruginosa (strain NIES-843 / IAM M-2473).